A 528-amino-acid chain; its full sequence is Probable cyclic di-GMP phosphodiesterase PdeC (528 aa).

The next 2 helical transmembrane spans lie at 14 to 34 and 242 to 262; these read GIIF…FLWA and HLIF…LLWL. One can recognise an EAL domain in the interval 268-520; that stretch reads YLSPKRKLQR…VFMQWMEQLP (253 aa).

The protein localises to the cell inner membrane. The catalysed reaction is 3',3'-c-di-GMP + H2O = 5'-phosphoguanylyl(3'-&gt;5')guanosine + H(+). Phosphodiesterase (PDE) that catalyzes the hydrolysis of cyclic-di-GMP (c-di-GMP) to 5'-pGpG. Cyclic-di-GMP is a second messenger which controls cell surface-associated traits in bacteria. Overexpression reduces biofilm formation. This is Probable cyclic di-GMP phosphodiesterase PdeC from Escherichia coli (strain K12).